The primary structure comprises 151 residues: Internal scaffolding protein VP3 (151 aa).

Residues 120–151 (VETPQQAPQSTTNQTTTKPAPASGEPTPVPTP) form a disordered region. Over residues 122-137 (TPQQAPQSTTNQTTTK) the composition is skewed to polar residues.

It belongs to the microvidae B protein family.

It is found in the host cytoplasm. Participates in the assembly of the viral procapsid in the cytoplasm. Internal scaffolding protein VP3 is released from the procapsid upon genome packaging, possibly through affinity displacement by the protein VP8, or by proteolysis. This Bdellovibrio bacteriovorus (Bacteriophage phiMH2K) protein is Internal scaffolding protein VP3.